The chain runs to 260 residues: Tropinone reductase 2 (260 aa).

NADP(+) is bound at residue 18-41; sequence SRGIGYGIVEELASLGASVYTCSR. Ser146 contributes to the substrate binding site. Tyr159 serves as the catalytic Proton acceptor. 192–196 contributes to the NADP(+) binding site; the sequence is IATSL.

This sequence belongs to the short-chain dehydrogenases/reductases (SDR) family. As to quaternary structure, homodimer.

It catalyses the reaction pseudotropine + NADP(+) = tropinone + NADPH + H(+). It participates in alkaloid biosynthesis; tropane alkaloid biosynthesis. In terms of biological role, catalyzes the stereospecific reduction of tropinone to pseudotropine. This chain is Tropinone reductase 2 (TR2), found in Datura stramonium (Jimsonweed).